An 84-amino-acid polypeptide reads, in one-letter code: Small ribosomal subunit protein uS17 (84 aa).

This sequence belongs to the universal ribosomal protein uS17 family. Part of the 30S ribosomal subunit.

Its function is as follows. One of the primary rRNA binding proteins, it binds specifically to the 5'-end of 16S ribosomal RNA. The polypeptide is Small ribosomal subunit protein uS17 (Caldanaerobacter subterraneus subsp. tengcongensis (strain DSM 15242 / JCM 11007 / NBRC 100824 / MB4) (Thermoanaerobacter tengcongensis)).